Reading from the N-terminus, the 62-residue chain is Small polypeptide DEVIL 17 (62 aa).

The interval arginine 27–lysine 58 is required for DVL/RTFL small polypeptide activity. Residues arginine 39–tryptophan 56 traverse the membrane as a helical segment.

The protein belongs to the DVL/RTFL small polypeptides family.

The protein localises to the cell membrane. Small polypeptide acting as a regulatory molecule which coordinates cellular responses required for differentiation, growth and development, probably by restricting polar cell proliferation in lateral organs and coordinating socket cell recruitment and differentiation at trichome sites. The polypeptide is Small polypeptide DEVIL 17 (Arabidopsis thaliana (Mouse-ear cress)).